We begin with the raw amino-acid sequence, 394 residues long: Elongation factor Tu (394 aa).

The 196-residue stretch at 10-205 folds into the tr-type G domain; it reads KPHMNVGTIG…TMDSYFDLPE (196 aa). Residues 19–26 are G1; the sequence is GHVDHGKT. 19-26 is a binding site for GTP; that stretch reads GHVDHGKT. Thr26 is a Mg(2+) binding site. Residues 61-65 form a G2 region; it reads GITIN. A G3 region spans residues 82–85; the sequence is DCPG. GTP is bound by residues 82-86 and 137-140; these read DCPGH and NKLD. Residues 137 to 140 are G4; it reads NKLD. Positions 173 to 175 are G5; sequence SAF.

It belongs to the TRAFAC class translation factor GTPase superfamily. Classic translation factor GTPase family. EF-Tu/EF-1A subfamily. Monomer.

Its subcellular location is the cytoplasm. It carries out the reaction GTP + H2O = GDP + phosphate + H(+). GTP hydrolase that promotes the GTP-dependent binding of aminoacyl-tRNA to the A-site of ribosomes during protein biosynthesis. The sequence is that of Elongation factor Tu from Borrelia hermsii (strain HS1 / DAH).